Reading from the N-terminus, the 455-residue chain is Tubulin delta chain (455 aa).

Residue 143 to 149 participates in GTP binding; the sequence is AGGTGSG.

It belongs to the tubulin family. In terms of assembly, found in a complex with TEDC1, TEDC2, TUBE1 and TUBD1. As to expression, highly expressed in testis.

The protein resides in the cell projection. Its subcellular location is the cilium. It localises to the cytoplasm. The protein localises to the cytoskeleton. It is found in the microtubule organizing center. The protein resides in the centrosome. Its subcellular location is the centriole. It localises to the nucleus. Its function is as follows. Acts as a positive regulator of hedgehog signaling and regulates ciliary function. This Mus musculus (Mouse) protein is Tubulin delta chain (Tubd1).